Consider the following 376-residue polypeptide: Putative F-box protein At3g18330 (376 aa).

The region spanning 1-46 (MPMPNLPKELVEEILSFVPATYLKRLSATCKPWNRLIHNDKRFARK) is the F-box domain.

The sequence is that of Putative F-box protein At3g18330 from Arabidopsis thaliana (Mouse-ear cress).